A 511-amino-acid polypeptide reads, in one-letter code: Ribose import ATP-binding protein RbsA (511 aa).

2 ABC transporter domains span residues 9–245 and 261–506; these read FEAK…VGRD and LRAE…LPRR. Position 41-48 (41-48) interacts with ATP; it reads GENGAGKS.

It belongs to the ABC transporter superfamily. Ribose importer (TC 3.A.1.2.1) family. As to quaternary structure, the complex is composed of an ATP-binding protein (RbsA), two transmembrane proteins (RbsC) and a solute-binding protein (RbsB).

It localises to the cell inner membrane. The enzyme catalyses D-ribose(out) + ATP + H2O = D-ribose(in) + ADP + phosphate + H(+). Functionally, part of the ABC transporter complex RbsABC involved in ribose import. Responsible for energy coupling to the transport system. The chain is Ribose import ATP-binding protein RbsA from Rhodopirellula baltica (strain DSM 10527 / NCIMB 13988 / SH1).